The chain runs to 91 residues: Mercuric transport protein periplasmic component (91 aa).

A signal peptide spans methionine 1 to alanine 19. In terms of domain architecture, HMA spans glutamine 22 to serine 88. Residues cysteine 33 and cysteine 36 each contribute to the Hg(2+) site.

Belongs to the MerP family. Monomer.

It localises to the periplasm. Its function is as follows. Involved in mercury resistance. Acts as a mercury scavenger that specifically binds to a mercuric ion in the periplasm and probably passes it to the cytoplasmic mercuric reductase MerA via the mercuric transport protein MerT. In Pseudomonas aeruginosa, this protein is Mercuric transport protein periplasmic component.